The following is a 379-amino-acid chain: Retinoic acid receptor RXR-alpha-B (379 aa).

Residues 1–22 (MPVPEQKQTVQLSSPMNAVSSS) show a composition bias toward polar residues. The disordered stretch occupies residues 1 to 24 (MPVPEQKQTVQLSSPMNAVSSSED). The modulating stretch occupies residues 1 to 53 (MPVPEQKQTVQLSSPMNAVSSSEDIKPPLGLNGVMKVPAHRIGTLSLSLTKHI). The nuclear receptor DNA-binding region spans 51–126 (KHICAICGDR…MGMKREAVQE (76 aa)). Residues cysteine 54, cysteine 57, cysteine 71, and cysteine 74 each contribute to the Zn(2+) site. Residues 54 to 74 (CAICGDRSSGKHYGVYSCEGC) form an NR C4-type zinc finger. The segment at 79 to 84 (KRTVRK) is nuclear localization signal. Cysteine 90, cysteine 96, cysteine 106, and cysteine 109 together coordinate Zn(2+). An NR C4-type zinc finger spans residues 90-109 (CRDNKDCMIDKRQRNRCQYC). The hinge stretch occupies residues 120–141 (KREAVQEERQRAKERSEAEFGG). In terms of domain architecture, NR LBD spans 144-375 (NEDMPVEKIL…TFLMEMLEAP (232 aa)). Arginine 233 and alanine 244 together coordinate 9-cis-retinoate. Residues arginine 233 and alanine 244 each coordinate all-trans-retinoate. Residues 265–285 (RVLTELVSKMRDMQMDKTELG) are required for nuclear export. Residues 364–375 (IDTFLMEMLEAP) form an AF-2 region.

Belongs to the nuclear hormone receptor family. NR2 subfamily. As to quaternary structure, homodimer. Heterodimer; with a rar molecule. Binds DNA preferentially as a rar/rxr heterodimer. In terms of tissue distribution, uniform expression from the blastula to mid-gastrula stages. At 12 hours post-fertilization (hpf), expressed strongly in the tail and weakly elsewhere. At 24 hpf, weak expression in the forebrain, eyes and pharyngeal endoderm and continued expression in the tail mesoderm. At 48 hpf, anterior expression limited to ventral cells underlying the head, medial expression in the pectoral fin bud mesoderm and continued tail expression.

Its subcellular location is the nucleus. In terms of biological role, receptor for retinoic acid that acts as a transcription factor. Forms homo- or heterodimers with retinoic acid receptors (rars) and binds to target response elements in response to their ligands, all-trans or 9-cis retinoic acid, to regulate gene expression in various biological processes. The rar/rxr heterodimers bind to the retinoic acid response elements (RARE) composed of tandem 5'-AGGTCA-3' sites known as DR1-DR5 to regulate transcription. The high affinity ligand for rxrs is 9-cis retinoic acid. In the absence of ligand, the rar/rxr heterodimers associate with a multiprotein complex containing transcription corepressors that induce histone deacetylation, chromatin condensation and transcriptional suppression. On ligand binding, the corepressors dissociate from the receptors and coactivators are recruited leading to transcriptional activation. This is Retinoic acid receptor RXR-alpha-B (rxrab) from Danio rerio (Zebrafish).